A 124-amino-acid chain; its full sequence is Large ribosomal subunit protein bL12 (124 aa).

This sequence belongs to the bacterial ribosomal protein bL12 family. In terms of assembly, homodimer. Part of the ribosomal stalk of the 50S ribosomal subunit. Forms a multimeric L10(L12)X complex, where L10 forms an elongated spine to which 2 to 4 L12 dimers bind in a sequential fashion. Binds GTP-bound translation factors.

Forms part of the ribosomal stalk which helps the ribosome interact with GTP-bound translation factors. Is thus essential for accurate translation. This is Large ribosomal subunit protein bL12 from Bacteroides thetaiotaomicron (strain ATCC 29148 / DSM 2079 / JCM 5827 / CCUG 10774 / NCTC 10582 / VPI-5482 / E50).